The sequence spans 346 residues: tRNA N6-adenosine threonylcarbamoyltransferase (346 aa).

Fe cation is bound by residues H111 and H115. Residues 134–138 (LVSGG), D167, G180, and N279 each bind substrate. D307 is a binding site for Fe cation.

It belongs to the KAE1 / TsaD family. The cofactor is Fe(2+).

It is found in the cytoplasm. It carries out the reaction L-threonylcarbamoyladenylate + adenosine(37) in tRNA = N(6)-L-threonylcarbamoyladenosine(37) in tRNA + AMP + H(+). In terms of biological role, required for the formation of a threonylcarbamoyl group on adenosine at position 37 (t(6)A37) in tRNAs that read codons beginning with adenine. Is involved in the transfer of the threonylcarbamoyl moiety of threonylcarbamoyl-AMP (TC-AMP) to the N6 group of A37, together with TsaE and TsaB. TsaD likely plays a direct catalytic role in this reaction. This Burkholderia ambifaria (strain ATCC BAA-244 / DSM 16087 / CCUG 44356 / LMG 19182 / AMMD) (Burkholderia cepacia (strain AMMD)) protein is tRNA N6-adenosine threonylcarbamoyltransferase.